The chain runs to 407 residues: Vancomycin aglycone glucosyltransferase (407 aa).

It belongs to the glycosyltransferase 28 family.

The enzyme catalyses vancomycin aglycone + UDP-alpha-D-glucose = devancoaminyl-vancomycin + UDP. The protein operates within antibiotic biosynthesis; vancomycin biosynthesis. Glucosyltransferase that transfers glucose to the 4-OH-Phegly(4) residue of vancomycin aglycone (AGV) to produce devancoaminyl-vancomycin (DVV) in the biosynthesis of glycopeptide antibiotic chloroeremomycin, a member of the vancomycin group of antibiotics. This Amycolatopsis orientalis (Nocardia orientalis) protein is Vancomycin aglycone glucosyltransferase (gtfB).